We begin with the raw amino-acid sequence, 600 residues long: Forkhead box protein O (600 aa).

Thr49 bears the Phosphothreonine; by PKB/AKT1 mark. Ser80 is subject to Phosphoserine. Residues 100 to 206 (WGNLSYADLI…ETSRYEKRRG (107 aa)) constitute a DNA-binding region (fork-head). Disordered regions lie at residues 187–210 (KSVR…RAKK), 222–283 (GLND…LEPD), 319–364 (QQGF…TPGY), and 580–600 (LNAR…SWVH). A Phosphoserine; by PKB/AKT1 modification is found at Ser195. Polar residues-rich tracts occupy residues 226–235 (ATPSPSSSVS) and 261–270 (RASSNASSCG). Ser264 carries the post-translational modification Phosphoserine; by PKB/AKT1. Phosphoserine is present on residues Ser267, Ser268, and Ser273. Over residues 330 to 342 (TQPPPPPYQPPQP) the composition is skewed to pro residues. Residues 343–354 (QQQQQQGQQPSP) are compositionally biased toward low complexity.

As to quaternary structure, interacts with melt.

Its subcellular location is the cytoplasm. It localises to the nucleus. Transcription factor involved in the regulation of the insulin signaling pathway. Consistently activates both the downstream target Thor\d4EBP and the feedback control target InR. Involved in negative regulation of the cell cycle, modulating cell growth and proliferation. In response to cellular stresses, such as nutrient deprivation or increased levels of reactive oxygen species, foxo is activated and inhibits growth through the action of target genes such as Thor. Foxo activated in the adult fat body can regulate lifespan in adults; an insulin peptide itself may function as one secondary messenger of insulin-regulated aging. Also regulates Lip4, homolog of human acid lipases, thereby acting as a key modulator of lipid metabolism by insulin signaling and integrates insulin responses to glucose and lipid homeostasis. The sequence is that of Forkhead box protein O from Drosophila ananassae (Fruit fly).